The following is a 78-amino-acid chain: Acyl carrier protein (78 aa).

A Carrier domain is found at 2 to 77 (SDTVERVKKI…DAVKFIDKAS (76 aa)). Position 37 is an O-(pantetheine 4'-phosphoryl)serine (Ser-37).

Belongs to the acyl carrier protein (ACP) family. Post-translationally, 4'-phosphopantetheine is transferred from CoA to a specific serine of apo-ACP by AcpS. This modification is essential for activity because fatty acids are bound in thioester linkage to the sulfhydryl of the prosthetic group.

It is found in the cytoplasm. The protein operates within lipid metabolism; fatty acid biosynthesis. In terms of biological role, carrier of the growing fatty acid chain in fatty acid biosynthesis. The polypeptide is Acyl carrier protein (Bartonella henselae (strain ATCC 49882 / DSM 28221 / CCUG 30454 / Houston 1) (Rochalimaea henselae)).